The following is a 472-amino-acid chain: Adenosylhomocysteinase (472 aa).

Residues Thr-61, Asp-136, and Glu-196 each contribute to the substrate site. Residue Thr-197–Thr-199 coordinates NAD(+). 2 residues coordinate substrate: Lys-226 and Asp-230. NAD(+) contacts are provided by residues Asn-231, Gly-260–Gly-265, Glu-283, Asn-318, Ile-339–His-341, and Asn-384.

This sequence belongs to the adenosylhomocysteinase family. It depends on NAD(+) as a cofactor.

Its subcellular location is the cytoplasm. It carries out the reaction S-adenosyl-L-homocysteine + H2O = L-homocysteine + adenosine. It participates in amino-acid biosynthesis; L-homocysteine biosynthesis; L-homocysteine from S-adenosyl-L-homocysteine: step 1/1. May play a key role in the regulation of the intracellular concentration of adenosylhomocysteine. The polypeptide is Adenosylhomocysteinase (Cupriavidus metallidurans (strain ATCC 43123 / DSM 2839 / NBRC 102507 / CH34) (Ralstonia metallidurans)).